A 139-amino-acid polypeptide reads, in one-letter code: MAPKAAEKKPSTGGKAPAGGKAPAEKKEAGKKTAASGEKKKRTKARKETYSSYIYKVLKQVHPDTGISNRAMSILNSFVNDIFERVATEASKLAAYNKKSTISSREIQTSVRLILPGELAKHAVSEGTKAVTKYSSSAK.

Residues Met-1–Pro-10 show a composition bias toward basic and acidic residues. Positions Met-1–Lys-47 are disordered. Lys-8 and Lys-9 each carry N6-acetyllysine; alternate. Residues Lys-8 and Lys-9 each participate in a glycyl lysine isopeptide (Lys-Gly) (interchain with G-Cter in SUMO); alternate cross-link. The span at Ser-11–Ala-22 shows a compositional bias: low complexity. At Lys-15 the chain carries N6-acetyllysine. Residue Lys-26 is modified to N6-acetyllysine; alternate. Residue Lys-26 forms a Glycyl lysine isopeptide (Lys-Gly) (interchain with G-Cter in SUMO); alternate linkage. A Glycyl lysine isopeptide (Lys-Gly) (interchain with G-Cter in SUMO) cross-link involves residue Lys-27. A Glycyl lysine isopeptide (Lys-Gly) (interchain with G-Cter in ubiquitin) cross-link involves residue Lys-133.

The protein belongs to the histone H2B family. The nucleosome is a histone octamer containing two molecules each of H2A, H2B, H3 and H4 assembled in one H3-H4 heterotetramer and two H2A-H2B heterodimers. The octamer wraps approximately 147 bp of DNA. Monoubiquitinated by the UBC2-BRE1 complex to form H2BK123ub1. H2BK123ub1 gives a specific tag for epigenetic transcriptional activation and is also prerequisite for H3K4me and H3K79me formation. H2BK123ub1 also modulates the formation of double-strand breaks during meiosis and is a prerequisite for DNA-damage checkpoint activation. In terms of processing, acetylated by GCN5 to form H2BK11ac and H2BK16ac. H2BK16ac can also be formed by ESA1. Acetylation of N-terminal lysines and particularly formation of H2BK11acK16ac has a positive effect on transcription. Post-translationally, sumoylation to form H2BK6su or H2BK7su, and probably also H2BK16su or H2BK17su, occurs preferentially near the telomeres and represses gene transcription.

It localises to the nucleus. The protein resides in the chromosome. Core component of nucleosome. Nucleosomes wrap and compact DNA into chromatin, limiting DNA accessibility to the cellular machineries which require DNA as a template. Histones thereby play a central role in transcription regulation, DNA repair, DNA replication and chromosomal stability. DNA accessibility is regulated via a complex set of post-translational modifications of histones, also called histone code, and nucleosome remodeling. The polypeptide is Histone H2B (HTB1) (Coccidioides immitis (strain RS) (Valley fever fungus)).